The following is a 456-amino-acid chain: Probable glycine dehydrogenase (decarboxylating) subunit 1 (456 aa).

The protein belongs to the GcvP family. N-terminal subunit subfamily. In terms of assembly, the glycine cleavage system is composed of four proteins: P, T, L and H. In this organism, the P 'protein' is a heterodimer of two subunits.

It carries out the reaction N(6)-[(R)-lipoyl]-L-lysyl-[glycine-cleavage complex H protein] + glycine + H(+) = N(6)-[(R)-S(8)-aminomethyldihydrolipoyl]-L-lysyl-[glycine-cleavage complex H protein] + CO2. Its function is as follows. The glycine cleavage system catalyzes the degradation of glycine. The P protein binds the alpha-amino group of glycine through its pyridoxal phosphate cofactor; CO(2) is released and the remaining methylamine moiety is then transferred to the lipoamide cofactor of the H protein. This Legionella pneumophila (strain Paris) protein is Probable glycine dehydrogenase (decarboxylating) subunit 1.